The sequence spans 568 residues: Sulfite reductase [NADPH] hemoprotein beta-component (568 aa).

Residues cysteine 425, cysteine 431, cysteine 470, and cysteine 474 each coordinate [4Fe-4S] cluster. Residue cysteine 474 coordinates siroheme.

This sequence belongs to the nitrite and sulfite reductase 4Fe-4S domain family. As to quaternary structure, alpha(8)-beta(8). The alpha component is a flavoprotein, the beta component is a hemoprotein. Requires siroheme as cofactor. It depends on [4Fe-4S] cluster as a cofactor.

It carries out the reaction hydrogen sulfide + 3 NADP(+) + 3 H2O = sulfite + 3 NADPH + 4 H(+). The protein operates within sulfur metabolism; hydrogen sulfide biosynthesis; hydrogen sulfide from sulfite (NADPH route): step 1/1. Its function is as follows. Component of the sulfite reductase complex that catalyzes the 6-electron reduction of sulfite to sulfide. This is one of several activities required for the biosynthesis of L-cysteine from sulfate. The polypeptide is Sulfite reductase [NADPH] hemoprotein beta-component (Xanthomonas oryzae pv. oryzae (strain MAFF 311018)).